The chain runs to 365 residues: Protein RecA (365 aa).

Position 81–88 (81–88 (GPESSGKT)) interacts with ATP.

This sequence belongs to the RecA family.

It localises to the cytoplasm. Its function is as follows. Can catalyze the hydrolysis of ATP in the presence of single-stranded DNA, the ATP-dependent uptake of single-stranded DNA by duplex DNA, and the ATP-dependent hybridization of homologous single-stranded DNAs. It interacts with LexA causing its activation and leading to its autocatalytic cleavage. The polypeptide is Protein RecA (Borreliella burgdorferi (strain ATCC 35210 / DSM 4680 / CIP 102532 / B31) (Borrelia burgdorferi)).